A 49-amino-acid chain; its full sequence is Isoflavone reductase homolog 2 (49 aa).

5 to 11 is an NADP(+) binding site; that stretch reads GGTGYIG.

This sequence belongs to the NmrA-type oxidoreductase family. Isoflavone reductase subfamily.

Its subcellular location is the cytoplasm. This is Isoflavone reductase homolog 2 from Pseudotsuga menziesii (Douglas-fir).